The chain runs to 258 residues: Tryptophan synthase alpha chain (258 aa).

Catalysis depends on proton acceptor residues glutamate 52 and aspartate 63.

This sequence belongs to the TrpA family. In terms of assembly, tetramer of two alpha and two beta chains.

It catalyses the reaction (1S,2R)-1-C-(indol-3-yl)glycerol 3-phosphate + L-serine = D-glyceraldehyde 3-phosphate + L-tryptophan + H2O. It participates in amino-acid biosynthesis; L-tryptophan biosynthesis; L-tryptophan from chorismate: step 5/5. Functionally, the alpha subunit is responsible for the aldol cleavage of indoleglycerol phosphate to indole and glyceraldehyde 3-phosphate. In Streptococcus pneumoniae (strain P1031), this protein is Tryptophan synthase alpha chain.